The primary structure comprises 705 residues: Ribosomal RNA large subunit methyltransferase K/L (705 aa).

Residues Val-43–Leu-154 form the THUMP domain.

It belongs to the methyltransferase superfamily. RlmKL family.

Its subcellular location is the cytoplasm. The catalysed reaction is guanosine(2445) in 23S rRNA + S-adenosyl-L-methionine = N(2)-methylguanosine(2445) in 23S rRNA + S-adenosyl-L-homocysteine + H(+). It carries out the reaction guanosine(2069) in 23S rRNA + S-adenosyl-L-methionine = N(2)-methylguanosine(2069) in 23S rRNA + S-adenosyl-L-homocysteine + H(+). Functionally, specifically methylates the guanine in position 2445 (m2G2445) and the guanine in position 2069 (m7G2069) of 23S rRNA. This Aliivibrio salmonicida (strain LFI1238) (Vibrio salmonicida (strain LFI1238)) protein is Ribosomal RNA large subunit methyltransferase K/L.